A 1342-amino-acid chain; its full sequence is DNA-directed RNA polymerase subunit beta (1342 aa).

N6-acetyllysine is present on residues lysine 1022 and lysine 1200.

It belongs to the RNA polymerase beta chain family. As to quaternary structure, the RNAP catalytic core consists of 2 alpha, 1 beta, 1 beta' and 1 omega subunit. When a sigma factor is associated with the core the holoenzyme is formed, which can initiate transcription.

The enzyme catalyses RNA(n) + a ribonucleoside 5'-triphosphate = RNA(n+1) + diphosphate. Functionally, DNA-dependent RNA polymerase catalyzes the transcription of DNA into RNA using the four ribonucleoside triphosphates as substrates. This is DNA-directed RNA polymerase subunit beta from Shigella dysenteriae serotype 1 (strain Sd197).